A 283-amino-acid chain; its full sequence is MWGGEMNIFKQKEREFALNRIPVLKEKFPESNQILNFLSHILEYHNSIISEISDLSISLDNQNIESRLGKGKPALKLSEYDFEPFLKYFYPLLNIVYEHGTPQMKERVEHLQSLEKKEILSLISSFLENGISDDMLRFFLISYLQPILYTFADKVKFEHERWFKNYCPVCGSKPSVSFIMDTEDWEGARFLRCSVCLTDWLYVRTKCVNCGNVEDDSLDYFISSELDYIEIQTCKKCNSYIKIIDLRKDGLAVPDLEDIASVSLDLWAQEQGFIKVERNFMGY.

It belongs to the FdhE family.

The protein resides in the cytoplasm. Functionally, necessary for formate dehydrogenase activity. In Aquifex aeolicus (strain VF5), this protein is Protein FdhE homolog.